A 341-amino-acid polypeptide reads, in one-letter code: Malate dehydrogenase, mitochondrial (341 aa).

Residues 35–41 (GAAGGIG) and D61 each bind NAD(+). Residues R108 and R114 each coordinate substrate. Residues N121 and 144–146 (ITN) contribute to the NAD(+) site. Residues N146 and R180 each coordinate substrate. The active-site Proton acceptor is H204. M255 contacts NAD(+).

The protein belongs to the LDH/MDH superfamily. MDH type 1 family. Homodimer.

The protein localises to the mitochondrion matrix. It carries out the reaction (S)-malate + NAD(+) = oxaloacetate + NADH + H(+). In terms of biological role, catalyzes the reversible conversion of (S)-malate to oxaloacetate in the citric acid cycle. The sequence is that of Malate dehydrogenase, mitochondrial from Caenorhabditis elegans.